Consider the following 1849-residue polypeptide: MLKAVLKKSREGVKGSKKEAGGDFGSETPTLSSSGDSPVNSLSTTEDTYRVSLAKGVSMSLPSSPLLPRQSHLTQSRANKKSPGPVRKPKYVESPRVPGDPVMIPFREGSKPAEPIETEAKVDNEPSCSPAAQELLTRLGFLLGEGIPSATHITIEDKNEAMCTALSQGISPCSTLTSSTASPSTDSPCSTLNSCVSKTAANKSPCETISSPSSTLESKDSGIIATITSSSENDDRSGSSLEWNRDGSLRLGVQKGVLHDRRLDNCSPVAEEETTGSAESVLPKAESSAGDGPVPYSQSSGSLIMPRPNSVAATSSTKLEDLSYLDGQRNAPLRTSIRLPWHSTAGARFAPYKPQEILLKPLLFEVPSITTDSVFVGRDWLFQQIEENLRNTELAENRGAVVVGNVGFGKTAIISKLVALSCHGSRMRQVASSSPSSSLKTSDPTHDLPGTPLLSPSSSTSALSAARTPPGPGTVDSQRPREDAVKYLASRVVAYHYCQADNTYTCLVPEFVHSIATLLCRSHQLAAYRDLLIREPQLQSMLNLRSCVQDPVAAFKRGILEPLTNLRNEQKIPEEEYIILIDGLNEAEFHKPDHGDTLSSFITKIIPKFPPWLKLIVTVRADFQEIISTLPFVKLSLDDFPGNQDIHSDLHAYVQHRVHSSQDILSNISLNGKADAALIGKVSSRLVLRNLGSYLYLKLTLDLFQRGHLVIKSASYKVVPVSLSELYLLQCNMKFMTQSAFDRALPILNVALASLHPMTDEQIFQAINAGHIQGEQGWEDFQQKMEALSCFLIKKRDKTRMFCHPSFREWLVWRADGESTAFLCEPRNGHALLAFMFSRQESKLNRQQTVELGHHILKAHIFKGLSKKTGVSSSHPQALWIGYSTEGLSAALASLRNLYTPNVKVSRLLILGGANVNYRTEVLNNAPILCVQSHLGHEEVVTLLLEFGACLDGMSENGMNALCYAAAAGHMKLVCLLTKKGARVDHLDKKGQCALVHSALRGHSDILQYLLNCEWSAGPPQPGTLRKSQALQQALTAAASMGHSAVVQSLLGMAEEHEIEVNGTDTLWGETALTAAAGRGKLEICELLLERGAAVSRANRRGVPPLFCAARQGHWQVVQLLLDRGCDVNPNDKQGRTPLMVAACEGHLSTVEFLLSKGAALSSLDKEGLSALSWACLKGHRAVVQYLVEEGAEIDQTDKNGRTPLDLAAFYGDAETVLYLVEKGAVIEHVDHSGMRPLDRAIGCRNTAVVVTLLRKGAKLGNAAWAMATFKPDILIILLQKLMEEGNVMYKKGKMKEAAQRYQYALRKFPREGPGEDMRPFNELRVSLYLNLSRCRRKTNDFGLAEEFASKALELKPKSYEAFYARARAKRNSRQFLAALADLQEAVKLCPTNQEIKRLLARVEEECKQLQRNQQQKQQAPLPAPPNDSDNDEEAPASSLKDHFPIEEAEEEDTSSQEESISPTPRSQPPPSVPSPYIRNLQEGLQSKGRPASPQSWAGISKSLRETVAQPGLVMQPTKQAQIVKTNQHLGSGQSSMRNSNTKVQVSSQNPPPSPMPGRVSAAPAVSRNQHLEGTGPFSTGTGCGHFGDRLGPSQSLQLQRGESGTAYPLPSKVKAAERLLAHASVAVDMALPSQGGPVSCSDVRHPASLSSSGSSGSPSSSVKMSSSTSSLTSSSSVSDGFKAQGPDCRIRDRGTTQVQGGTAEHRPRNTPFMGIMDKIARFQQQVNPPSRSWHCPVTEGLLTNTATAAGLQTNSEKPALKPGGYCSQAKPCSVPPLGMGVHNGAQVKELEENKCQVPALCQDNRKTKGVPHLYPEGVSKQPLHVSTEAHRSHLTSAKPKRSFIESNV.

Met1 is subject to N-acetylmethionine. Disordered regions lie at residues 1 to 47 and 59 to 109; these read MLKA…TTED and MSLP…FREG. The span at 8–21 shows a compositional bias: basic and acidic residues; sequence KSREGVKGSKKEAG. Positions 27–46 are enriched in polar residues; the sequence is ETPTLSSSGDSPVNSLSTTE. Phosphoserine is present on residues Ser60, Ser63, Ser64, Ser204, Ser267, and Ser455. Disordered regions lie at residues 264–309 and 430–481; these read DNCS…PRPN and VASS…QRPR. Residues 451–468 are compositionally biased toward low complexity; it reads TPLLSPSSSTSALSAART. 11 ANK repeats span residues 886–918, 924–953, 957–986, 990–1019, 1030–1059, 1068–1097, 1101–1130, 1134–1163, 1167–1196, 1200–1229, and 1233–1262; these read EGLS…NVNY, NNAP…CLDG, NGMN…RVDH, KGQC…SAGP, ALQQ…EHEI, WGET…AVSR, RGVP…DVNP, QGRT…ALSS, EGLS…EIDQ, NGRT…VIEH, and SGMR…KLGN. 3 TPR repeats span residues 1279–1312, 1326–1359, and 1361–1393; these read LQKL…FPRE, VSLY…KPKS, and EAFY…CPTN. Low complexity predominate over residues 1410–1421; that stretch reads LQRNQQQKQQAP. Disordered regions lie at residues 1410–1503, 1527–1605, 1635–1711, and 1812–1849; these read LQRN…ISKS, NQHL…GESG, QGGP…PRNT, and PHLY…ESNV. A phosphoserine mark is found at Ser1429 and Ser1456. The span at 1447–1456 shows a compositional bias: acidic residues; it reads EEAEEEDTSS. Polar residues-rich tracts occupy residues 1527 to 1546 and 1593 to 1603; these read NQHL…KVQV and PSQSLQLQRGE. Residues 1649 to 1679 are compositionally biased toward low complexity; it reads SLSSSGSSGSPSSSVKMSSSTSSLTSSSSVS. A phosphoserine mark is found at Ser1658, Ser1666, and Ser1667.

It belongs to the TANC family. As to quaternary structure, interacts probably directly with DLG1, DLG4, HOMER1. Interacts with DLGAP1, INA, CAMK2A, GRIN2B and GRIA1. Interacts with TNIK and MINK1. Post-translationally, phosphorylated; by MINK1 and TNIK upon stimulation by RAP2A. Expressed in heart, lung, liver and kidney. Expressed in brain (at protein level).

The protein resides in the postsynaptic density. May be a scaffold component in the postsynaptic density. This is Protein TANC1 (Tanc1) from Rattus norvegicus (Rat).